Reading from the N-terminus, the 90-residue chain is Translation initiation factor IF-1 (90 aa).

Residues 15–90 (KKQKRKKEEV…TLGRIVFRHK (76 aa)) form the S1-like domain.

This sequence belongs to the IF-1 family. As to quaternary structure, component of the 30S ribosomal translation pre-initiation complex which assembles on the 30S ribosome in the order IF-2 and IF-3, IF-1 and N-formylmethionyl-tRNA(fMet); mRNA recruitment can occur at any time during PIC assembly.

The protein resides in the cytoplasm. Functionally, one of the essential components for the initiation of protein synthesis. Stabilizes the binding of IF-2 and IF-3 on the 30S subunit to which N-formylmethionyl-tRNA(fMet) subsequently binds. Helps modulate mRNA selection, yielding the 30S pre-initiation complex (PIC). Upon addition of the 50S ribosomal subunit IF-1, IF-2 and IF-3 are released leaving the mature 70S translation initiation complex. This chain is Translation initiation factor IF-1, found in Mycoplasma sp.